A 364-amino-acid chain; its full sequence is 2-oxoadipate dioxygenase/decarboxylase, chloroplastic/amyloplastic (364 aa).

The transit peptide at 1 to 49 (MAVALAGARSPGAGAILSLRRLAPAAAAPVRLGGSGTPGTRRRRGIAMA) directs the protein to the chloroplast. Residues H107 and R111 each contribute to the 2-oxoadipate site. H107 provides a ligand contact to Fe(2+). Residue H243 participates in Fe(2+) binding. Positions 289 and 313 each coordinate 2-oxoadipate. A Fe(2+)-binding site is contributed by E315.

The protein belongs to the 2-oxoadipate dioxygenase/decarboxylase family. The cofactor is Fe(2+). In terms of tissue distribution, expressed in roots, stems, leaf sheaths, leaf blades, panicles, and endosperm.

Its subcellular location is the plastid. The protein localises to the chloroplast. The protein resides in the amyloplast. The catalysed reaction is 2-oxoadipate + O2 = (R)-2-hydroxyglutarate + CO2. It participates in amino-acid degradation. In terms of biological role, catalyzes the decarboxylation and hydroxylation of 2-oxoadipate (2OA) to form D-2-hydroxyglutarate (D-2-HGA). Is involved in a D-lysine catabolic pathway. Involved in the regulation of starch synthesis and amyloplast development within the peripheral endosperm during the grain-filling stage. This is 2-oxoadipate dioxygenase/decarboxylase, chloroplastic/amyloplastic from Oryza sativa subsp. japonica (Rice).